Consider the following 329-residue polypeptide: Serine, glycine and glutamine-rich protein (329 aa).

The N-terminal stretch at 1–16 (MKTVLLFVVLVGLAYC) is a signal peptide. The segment covering 38-48 (SSSSSSSSSSS) has biased composition (low complexity). The disordered stretch occupies residues 38 to 80 (SSSSSSSSSSSSGGGGSSGGGASGGGGGSSSGGGGASGGGGGG). Over residues 49 to 80 (SGGGGSSGGGASGGGGGSSSGGGGASGGGGGG) the composition is skewed to gly residues.

As to expression, prismatic layer of shell (at protein level). Expressed primarily in the mantle with highest level in the mantle edge and lower level in the mantle pallium.

Its subcellular location is the secreted. In Pinctada maxima (Silver-lipped pearl oyster), this protein is Serine, glycine and glutamine-rich protein.